The primary structure comprises 892 residues: UPF0182 protein Gura_0902 (892 aa).

The next 7 membrane-spanning stretches (helical) occupy residues 6–26 (FIII…LINF), 50–70 (VGAG…NLHF), 103–123 (LGIL…AMQW), 158–178 (MLKI…GAVY), 201–221 (LAVL…LNGC), 248–268 (ILTV…WQGA), and 271–291 (LALL…KAYP).

The protein belongs to the UPF0182 family.

It localises to the cell membrane. In Geotalea uraniireducens (strain Rf4) (Geobacter uraniireducens), this protein is UPF0182 protein Gura_0902.